Here is an 860-residue protein sequence, read N- to C-terminus: Probable leucine--tRNA ligase, cytoplasmic (860 aa).

The short motif at 41-51 (PYMNGKLHLGH) is the 'HIGH' region element. Positions 552–556 (KMSKS) match the 'KMSKS' region motif. Residue Lys555 participates in ATP binding.

Belongs to the class-I aminoacyl-tRNA synthetase family.

The protein localises to the cytoplasm. The enzyme catalyses tRNA(Leu) + L-leucine + ATP = L-leucyl-tRNA(Leu) + AMP + diphosphate. This Enterocytozoon bieneusi (strain H348) (Microsporidian parasite) protein is Probable leucine--tRNA ligase, cytoplasmic.